Reading from the N-terminus, the 471-residue chain is Methylenetetrahydrofolate--tRNA-(uracil-5-)-methyltransferase TrmFO (471 aa).

9–14 (GGGLSG) is a binding site for FAD.

The protein belongs to the MnmG family. TrmFO subfamily. FAD is required as a cofactor.

The protein localises to the cytoplasm. The enzyme catalyses uridine(54) in tRNA + (6R)-5,10-methylene-5,6,7,8-tetrahydrofolate + NADH + H(+) = 5-methyluridine(54) in tRNA + (6S)-5,6,7,8-tetrahydrofolate + NAD(+). It catalyses the reaction uridine(54) in tRNA + (6R)-5,10-methylene-5,6,7,8-tetrahydrofolate + NADPH + H(+) = 5-methyluridine(54) in tRNA + (6S)-5,6,7,8-tetrahydrofolate + NADP(+). Its function is as follows. Catalyzes the folate-dependent formation of 5-methyl-uridine at position 54 (M-5-U54) in all tRNAs. The polypeptide is Methylenetetrahydrofolate--tRNA-(uracil-5-)-methyltransferase TrmFO (Beijerinckia indica subsp. indica (strain ATCC 9039 / DSM 1715 / NCIMB 8712)).